Here is a 180-residue protein sequence, read N- to C-terminus: MLKLLSEIGPVIAFFAGFFYGGGIQNATLYMLITAIICVTICYFVDKKVSKLSIISVSVLLVSGIITLISGNSIYIKIKPTILYVIFGIIFLMSGIRKNPFIKYALESIVRLKEESWITLSYRAAAFFFFMAVVNEIVWRNFSDETWVKFKVFGVIPITFIFILLQLPLLLKNKLPDSKI.

Transmembrane regions (helical) follow at residues 25–45 (QNAT…CYFV), 54–74 (IISV…GNSI), 76–96 (IKIK…MSGI), 118–138 (ITLS…NEIV), and 150–170 (FKVF…LPLL).

The protein belongs to the YciB family.

The protein localises to the cell inner membrane. Its function is as follows. Plays a role in cell envelope biogenesis, maintenance of cell envelope integrity and membrane homeostasis. In Rickettsia canadensis (strain McKiel), this protein is Inner membrane-spanning protein YciB.